A 323-amino-acid polypeptide reads, in one-letter code: Lipoyl synthase (323 aa).

The [4Fe-4S] cluster site is built by cysteine 61, cysteine 66, cysteine 72, cysteine 87, cysteine 91, cysteine 94, and serine 300. The region spanning 73–289 is the Radical SAM core domain; it reads WDKKHATFMI…ETVAYSKGFL (217 aa).

Belongs to the radical SAM superfamily. Lipoyl synthase family. The cofactor is [4Fe-4S] cluster.

Its subcellular location is the cytoplasm. The catalysed reaction is [[Fe-S] cluster scaffold protein carrying a second [4Fe-4S](2+) cluster] + N(6)-octanoyl-L-lysyl-[protein] + 2 oxidized [2Fe-2S]-[ferredoxin] + 2 S-adenosyl-L-methionine + 4 H(+) = [[Fe-S] cluster scaffold protein] + N(6)-[(R)-dihydrolipoyl]-L-lysyl-[protein] + 4 Fe(3+) + 2 hydrogen sulfide + 2 5'-deoxyadenosine + 2 L-methionine + 2 reduced [2Fe-2S]-[ferredoxin]. Its pathway is protein modification; protein lipoylation via endogenous pathway; protein N(6)-(lipoyl)lysine from octanoyl-[acyl-carrier-protein]: step 2/2. Functionally, catalyzes the radical-mediated insertion of two sulfur atoms into the C-6 and C-8 positions of the octanoyl moiety bound to the lipoyl domains of lipoate-dependent enzymes, thereby converting the octanoylated domains into lipoylated derivatives. The chain is Lipoyl synthase from Rhizobium etli (strain ATCC 51251 / DSM 11541 / JCM 21823 / NBRC 15573 / CFN 42).